The primary structure comprises 272 residues: Small ribosomal subunit protein uS2 (272 aa).

The tract at residues 238-272 is disordered; it reads ASKEEQTEEAEEETLSSKYREQDFQEAKSGARGEK. Positions 255 to 272 are enriched in basic and acidic residues; it reads KYREQDFQEAKSGARGEK.

Belongs to the universal ribosomal protein uS2 family.

The sequence is that of Small ribosomal subunit protein uS2 from Protochlamydia amoebophila (strain UWE25).